A 539-amino-acid chain; its full sequence is T-complex protein 1 subunit zeta (539 aa).

Belongs to the TCP-1 chaperonin family. Heterooligomeric complex of about 850 to 900 kDa that forms two stacked rings, 12 to 16 nm in diameter.

It localises to the cytoplasm. In terms of biological role, molecular chaperone; assists the folding of proteins upon ATP hydrolysis. Known to play a role, in vitro, in the folding of actin and tubulin. The protein is T-complex protein 1 subunit zeta (cct-6) of Caenorhabditis elegans.